The following is a 259-amino-acid chain: Zinc import ATP-binding protein ZnuC (259 aa).

Residues 6–223 form the ABC transporter domain; that stretch reads VTVQSVSVTL…PAYHELFGPG (218 aa). 38–45 serves as a coordination point for ATP; the sequence is GPNGAGKS. The disordered stretch occupies residues 230 to 259; the sequence is ALYTHDHDHDHDLHGNATHSHDHNGPCNHD. Positions 233 to 259 are enriched in basic and acidic residues; the sequence is THDHDHDHDLHGNATHSHDHNGPCNHD.

This sequence belongs to the ABC transporter superfamily. Zinc importer (TC 3.A.1.15.5) family. The complex is composed of two ATP-binding proteins (ZnuC), two transmembrane proteins (ZnuB) and a solute-binding protein (ZnuA).

Its subcellular location is the cell inner membrane. It carries out the reaction Zn(2+)(out) + ATP(in) + H2O(in) = Zn(2+)(in) + ADP(in) + phosphate(in) + H(+)(in). Part of the ABC transporter complex ZnuABC involved in zinc import. Responsible for energy coupling to the transport system. The protein is Zinc import ATP-binding protein ZnuC of Alcanivorax borkumensis (strain ATCC 700651 / DSM 11573 / NCIMB 13689 / SK2).